The sequence spans 638 residues: Leucine-rich repeat-containing protein 63 (638 aa).

Disordered stretches follow at residues 220 to 241 and 306 to 325; these read VPSTSSVIPEPQWSERTHPSAA and TTAAVSGKTEAHKPPETVQR. LRR repeat units follow at residues 389-412, 413-435, 437-458, 460-481, 482-504, and 532-556; these read AFQLVYLNLSFNDLNQFPIEILYL, QNLQVLKLRNNPIKEIPSEIHLL, YLRIFSIAFNYITKLPDGLFCL, YLEELDVSYNEIENISNEIQKL, RSLEKLIVDGNPITSFPPGILKL, and LTQICSLFLVKNKLLDYIPDAVRKS.

This chain is Leucine-rich repeat-containing protein 63, found in Mus musculus (Mouse).